The chain runs to 70 residues: Uteroglobin (70 aa).

This sequence belongs to the secretoglobin family. Antiparallel homodimer; disulfide-linked. Interaction with LMBR1L is controversial. In terms of tissue distribution, club cells (nonciliated cells of the surface epithelium of the pulmonary airways).

It localises to the secreted. Its function is as follows. Binds phosphatidylcholine, phosphatidylinositol, polychlorinated biphenyls (PCB) and weakly progesterone, potent inhibitor of phospholipase A2. The sequence is that of Uteroglobin (SCGB1A1) from Macaca fuscata fuscata (Japanese macaque).